Consider the following 171-residue polypeptide: Probable deoxyuridine 5'-triphosphate nucleotidohydrolase (171 aa).

This sequence belongs to the dCTP deaminase family. Archaeal dUTPase subfamily.

It carries out the reaction dUTP + H2O = dUMP + diphosphate + H(+). Its pathway is pyrimidine metabolism; dUMP biosynthesis; dUMP from dCTP (dUTP route): step 2/2. In terms of biological role, this enzyme is involved in nucleotide metabolism: it produces dUMP, the immediate precursor of thymidine nucleotides and it decreases the intracellular concentration of dUTP so that uracil cannot be incorporated into DNA. This Methanosarcina acetivorans (strain ATCC 35395 / DSM 2834 / JCM 12185 / C2A) protein is Probable deoxyuridine 5'-triphosphate nucleotidohydrolase.